The chain runs to 183 residues: ARS-binding factor 2, mitochondrial (183 aa).

A mitochondrion-targeting transit peptide spans 1 to 26 (MNSYSLLTRSFHESSKPLFNLASTLL). 2 consecutive DNA-binding regions (HMG box) follow at residues 43–111 (PKRP…KEFD) and 116–183 (PKKP…YPLN).

The protein localises to the mitochondrion. The protein resides in the nucleus. Its function is as follows. Specific binding to the autonomously replicating sequence 1 (ARS1). Interaction with regulatory regions: probably involved in compacting the mitochondrial genome. It might play a positive role in gene expression and replication. The protein is ARS-binding factor 2, mitochondrial (ABF2) of Saccharomyces cerevisiae (strain ATCC 204508 / S288c) (Baker's yeast).